A 199-amino-acid polypeptide reads, in one-letter code: FMN-dependent NADH:quinone oxidoreductase 2 (199 aa).

Residues serine 10, 16–18, and 96–99 each bind FMN; these read SVS and MYNF.

It belongs to the azoreductase type 1 family. As to quaternary structure, homodimer. FMN serves as cofactor.

The enzyme catalyses 2 a quinone + NADH + H(+) = 2 a 1,4-benzosemiquinone + NAD(+). It catalyses the reaction N,N-dimethyl-1,4-phenylenediamine + anthranilate + 2 NAD(+) = 2-(4-dimethylaminophenyl)diazenylbenzoate + 2 NADH + 2 H(+). In terms of biological role, quinone reductase that provides resistance to thiol-specific stress caused by electrophilic quinones. Functionally, also exhibits azoreductase activity. Catalyzes the reductive cleavage of the azo bond in aromatic azo compounds to the corresponding amines. This chain is FMN-dependent NADH:quinone oxidoreductase 2, found in Pseudomonas fluorescens (strain Pf0-1).